We begin with the raw amino-acid sequence, 254 residues long: Uridine-cytidine kinase 1 (254 aa).

The disordered stretch occupies residues 1–29; that stretch reads MASAGGDECEGAAPEADRPHQRPFLIGVS. Residue 30-38 participates in ATP binding; that stretch reads GGTASGKST. The substrate site is built by Asp87, Tyr115, His120, Arg146, Arg155, and Gln163. Residue Asp192 participates in ATP binding. Residues 224 to 254 are disordered; sequence SYKRTFSEPGDHPGMLTSGKRSHLESSSRPH. Thr228 carries the post-translational modification Phosphothreonine. Residue Ser230 is modified to Phosphoserine. The span at 245-254 shows a compositional bias: basic and acidic residues; that stretch reads SHLESSSRPH.

Belongs to the uridine kinase family.

The catalysed reaction is uridine + ATP = UMP + ADP + H(+). It catalyses the reaction cytidine + ATP = CMP + ADP + H(+). It participates in pyrimidine metabolism; CTP biosynthesis via salvage pathway; CTP from cytidine: step 1/3. The protein operates within pyrimidine metabolism; UMP biosynthesis via salvage pathway; UMP from uridine: step 1/1. Phosphorylates uridine and cytidine to uridine monophosphate and cytidine monophosphate. Does not phosphorylate deoxyribonucleosides or purine ribonucleosides. Can use ATP or GTP as a phosphate donor. This Macaca fascicularis (Crab-eating macaque) protein is Uridine-cytidine kinase 1 (UCK1).